A 386-amino-acid polypeptide reads, in one-letter code: S-adenosylmethionine synthase (386 aa).

Position 16 (histidine 16) interacts with ATP. Aspartate 18 provides a ligand contact to Mg(2+). Residue glutamate 44 coordinates K(+). The L-methionine site is built by glutamate 57 and glutamine 100. Residues 100-110 (QSPDINVGVDQ) are flexible loop. Residues 164 to 166 (DGK), 231 to 232 (RF), aspartate 240, 246 to 247 (RK), alanine 263, and lysine 267 contribute to the ATP site. Aspartate 240 contacts L-methionine. Lysine 271 lines the L-methionine pocket.

Belongs to the AdoMet synthase family. Homotetramer; dimer of dimers. The cofactor is Mg(2+). Requires K(+) as cofactor.

Its subcellular location is the cytoplasm. It carries out the reaction L-methionine + ATP + H2O = S-adenosyl-L-methionine + phosphate + diphosphate. Its pathway is amino-acid biosynthesis; S-adenosyl-L-methionine biosynthesis; S-adenosyl-L-methionine from L-methionine: step 1/1. Its function is as follows. Catalyzes the formation of S-adenosylmethionine (AdoMet) from methionine and ATP. The overall synthetic reaction is composed of two sequential steps, AdoMet formation and the subsequent tripolyphosphate hydrolysis which occurs prior to release of AdoMet from the enzyme. In Sulfurovum sp. (strain NBC37-1), this protein is S-adenosylmethionine synthase.